We begin with the raw amino-acid sequence, 306 residues long: Non-specific ribonucleoside hydrolase RihC (306 aa).

H235 is an active-site residue.

It belongs to the IUNH family. RihC subfamily.

Hydrolyzes both purine and pyrimidine ribonucleosides with a broad-substrate specificity. In Salmonella agona (strain SL483), this protein is Non-specific ribonucleoside hydrolase RihC.